The following is a 61-amino-acid chain: MNNYTKDDDGRLNNFAVEPKIYAADAPSKADKRNYLIMAAITVVLVAGLIAVAVVASGAST.

Residues 36–56 (LIMAAITVVLVAGLIAVAVVA) form a helical membrane-spanning segment.

This sequence belongs to the Psb34 family. As to quaternary structure, part of the photosystem II (PSII) assembly intermediate RC47 complex (with D1, D2, CP47, PsbE, PsbF, PsbH, Psb27 and Psb28); minor amounts are found in other PSII complexes, including mature, dimeric PSII with PsbO and PsbV. No HliA or HliB are detected in any of these complexes. Its interaction with PSII requires both CP47 (psbB) and PsbH. HliA/HliB and Psb34 probably bind to a similar site on CP47; their binding seems to be mutually exclusive.

The protein localises to the cellular thylakoid membrane. Involved in photosystem II (PSII) assembly and/or repair. Probably involved in conversion of late PSII assembly intermediates into mature dimeric PSII, it may mediate the optimal equlibrium of HliA/HliB among the intermediates containing CP47 (psbB) to facilitate photoprotection during assembly. The protein is Photosystem II assembly protein Psb34 of Synechocystis sp. (strain ATCC 27184 / PCC 6803 / Kazusa).